Reading from the N-terminus, the 337-residue chain is Zinc finger protein 488 (337 aa).

A compositionally biased stretch (polar residues) spans methionine 1–serine 10. 3 disordered regions span residues methionine 1–lysine 32, serine 55–aspartate 83, and serine 146–alanine 179. Residues threonine 69 to glutamate 184 form an important for transcriptional repression activity region. 2 C2H2-type zinc fingers span residues asparagine 272–histidine 299 and leucine 314–histidine 336. Positions histidine 295–proline 302 match the Nuclear localization signal motif.

It belongs to the krueppel C2H2-type zinc-finger protein family. In terms of assembly, interacts with OLIG2.

The protein localises to the nucleus. Functionally, transcriptional repressor. Plays a role in oligodendrocyte differentiation, together with OLIG2. Mediates Notch signaling-activated formation of oligodendrocyte precursors. Promotes differentiation of adult neural stem progenitor cells (NSPCs) into mature oligodendrocytes and contributes to remyelination following nerve injury. This Mus musculus (Mouse) protein is Zinc finger protein 488 (Znf488).